Here is a 555-residue protein sequence, read N- to C-terminus: CTP synthase (555 aa).

The interval 1–265 is amidoligase domain; the sequence is MTRYIFITGG…GNRVCEKLNI (265 aa). Residue S13 participates in CTP binding. A UTP-binding site is contributed by S13. Residues 14-19 and D71 contribute to the ATP site; that span reads SLGKGI. Residues D71 and E139 each coordinate Mg(2+). CTP-binding positions include 146–148, 186–191, and K222; these read DIE and KTKPTQ. Residues 186–191 and K222 each bind UTP; that span reads KTKPTQ. Residues 290–541 form the Glutamine amidotransferase type-1 domain; sequence TVAVVGKYVD…IKAGLAAKEA (252 aa). L-glutamine is bound at residue G351. Catalysis depends on C378, which acts as the Nucleophile; for glutamine hydrolysis. L-glutamine-binding positions include 379 to 382, E402, and R469; that span reads LGMQ. Catalysis depends on residues H514 and E516.

This sequence belongs to the CTP synthase family. In terms of assembly, homotetramer.

It carries out the reaction UTP + L-glutamine + ATP + H2O = CTP + L-glutamate + ADP + phosphate + 2 H(+). The enzyme catalyses L-glutamine + H2O = L-glutamate + NH4(+). The catalysed reaction is UTP + NH4(+) + ATP = CTP + ADP + phosphate + 2 H(+). It functions in the pathway pyrimidine metabolism; CTP biosynthesis via de novo pathway; CTP from UDP: step 2/2. With respect to regulation, allosterically activated by GTP, when glutamine is the substrate; GTP has no effect on the reaction when ammonia is the substrate. The allosteric effector GTP functions by stabilizing the protein conformation that binds the tetrahedral intermediate(s) formed during glutamine hydrolysis. Inhibited by the product CTP, via allosteric rather than competitive inhibition. In terms of biological role, catalyzes the ATP-dependent amination of UTP to CTP with either L-glutamine or ammonia as the source of nitrogen. Regulates intracellular CTP levels through interactions with the four ribonucleotide triphosphates. This Coxiella burnetii (strain CbuG_Q212) (Coxiella burnetii (strain Q212)) protein is CTP synthase.